We begin with the raw amino-acid sequence, 272 residues long: D-aminoacyl-tRNA deacylase (272 aa).

The protein belongs to the DtdA deacylase family. In terms of assembly, monomer. Requires Zn(2+) as cofactor.

It carries out the reaction a D-aminoacyl-tRNA + H2O = a tRNA + a D-alpha-amino acid + H(+). The catalysed reaction is glycyl-tRNA(Ala) + H2O = tRNA(Ala) + glycine + H(+). D-aminoacyl-tRNA deacylase with broad substrate specificity. By recycling D-aminoacyl-tRNA to D-amino acids and free tRNA molecules, this enzyme counteracts the toxicity associated with the formation of D-aminoacyl-tRNA entities in vivo. This chain is D-aminoacyl-tRNA deacylase, found in Hyperthermus butylicus (strain DSM 5456 / JCM 9403 / PLM1-5).